Here is a 523-residue protein sequence, read N- to C-terminus: Bifunctional purine biosynthesis protein PurH (523 aa).

The 149-residue stretch at 4-152 (DHIRRPIRRA…KNHPSVAVVT (149 aa)) folds into the MGS-like domain.

Belongs to the PurH family.

It catalyses the reaction (6R)-10-formyltetrahydrofolate + 5-amino-1-(5-phospho-beta-D-ribosyl)imidazole-4-carboxamide = 5-formamido-1-(5-phospho-D-ribosyl)imidazole-4-carboxamide + (6S)-5,6,7,8-tetrahydrofolate. It carries out the reaction IMP + H2O = 5-formamido-1-(5-phospho-D-ribosyl)imidazole-4-carboxamide. Its pathway is purine metabolism; IMP biosynthesis via de novo pathway; 5-formamido-1-(5-phospho-D-ribosyl)imidazole-4-carboxamide from 5-amino-1-(5-phospho-D-ribosyl)imidazole-4-carboxamide (10-formyl THF route): step 1/1. The protein operates within purine metabolism; IMP biosynthesis via de novo pathway; IMP from 5-formamido-1-(5-phospho-D-ribosyl)imidazole-4-carboxamide: step 1/1. The protein is Bifunctional purine biosynthesis protein PurH of Mycobacterium ulcerans (strain Agy99).